The following is a 194-amino-acid chain: Cytochrome c oxidase assembly protein CtaG (194 aa).

Residues 1–12 (MALRGPAKTVAQ) lie on the Cytoplasmic side of the membrane. A helical; Signal-anchor for type II membrane protein membrane pass occupies residues 13–35 (TVSVVIFMGALAWASVPLYDWFC). Topologically, residues 36 to 194 (RVTGFGGVTG…IEENSDTSLN (159 aa)) are periplasmic.

Belongs to the COX11/CtaG family.

It is found in the cell inner membrane. Functionally, exerts its effect at some terminal stage of cytochrome c oxidase synthesis, probably by being involved in the insertion of the copper B into subunit I. This Roseobacter denitrificans (strain ATCC 33942 / OCh 114) (Erythrobacter sp. (strain OCh 114)) protein is Cytochrome c oxidase assembly protein CtaG.